We begin with the raw amino-acid sequence, 3744 residues long: SAGA complex/NuA4 acetyltransferase complex subunit TRA1 (3744 aa).

Residue S2 is modified to N-acetylserine. 4 HEAT repeats span residues 2-40, 46-92, 94-131, and 135-172; these read SLTE…LLNS, FFLQ…NQTF, PYAM…SFKS, and DKLD…DLDS. Positions 2–2598 are HEAT; the sequence is SLTEQIEQFA…KPYHTRQISS (2597 aa). The residue at position 172 (S172) is a Phosphoserine. The span at 185–195 shows a compositional bias: basic and acidic residues; it reads FSKNDEEKDFP. Residues 185-212 are disordered; the sequence is FSKNDEEKDFPSKQSSTEPRFENSTSSN. Polar residues predominate over residues 196-212; that stretch reads SKQSSTEPRFENSTSSN. 3 HEAT repeats span residues 247–284, 319–357, and 437–477; these read PEFT…ISTE, QDYV…ILST, and KLLL…RFKT. A compositionally biased stretch (basic and acidic residues) spans 522-539; the sequence is LEPSDDDHLMPQPKKEDI. The tract at residues 522 to 546 is disordered; it reads LEPSDDDHLMPQPKKEDINDSPDVE. Phosphoserine is present on S542. HEAT repeat units follow at residues 588-628, 734-771, 779-821, 829-867, 870-910, 919-958, 1074-1112, 1188-1225, 1283-1320, 1369-1408, 1435-1472, 1476-1512, 1693-1734, 1739-1776, 1918-1955, 2115-2155, 2182-2219, 2230-2267, 2269-2307, and 2536-2573; these read RTLM…VFSY, PNFA…LSFM, INEV…SIGG, RSIK…TVPV, SVLA…NLTA, PVID…RNRQ, NQEN…HFCL, SFIP…NVKS, KVLE…LTGI, TFNE…SEQL, NIRI…ENSK, ELLQ…LLIA, LKLK…RFTE, DQNP…SSNK, FPIK…VLHE, ELGL…LDSE, ENLP…AIKA, SPGK…FMNF, DNIV…ARIT, and IISS…SIPK. A head region spans residues 2599–3744; it reads RTNVINMLLD…RTDVNFMPWF (1146 aa). Positions 2622 to 3177 constitute an FAT domain; sequence LVKYLAISYN…HFQLRTTKED (556 aa). One can recognise a PI3K/PI4K catalytic domain in the interval 3374–3732; sequence FLPTVDFVRG…CIGSAVSPRN (359 aa). The G-loop stretch occupies residues 3380 to 3386; it reads FVRGTHS. Residues 3563-3571 form a catalytic loop region; it reads MINNRTPHK. The tract at residues 3600-3625 is activation loop; that stretch reads LKNHDLSLPPDSPIFHNNEPVPFRLT. An FATC domain is found at 3712–3744; the sequence is TPTVTTQFILDCIGSAVSPRNLARTDVNFMPWF.

The protein belongs to the PI3/PI4-kinase family. TRA1 subfamily. As to quaternary structure, component of the 1.8 MDa SAGA (Spt-Ada-Gcn5 acetyltransferase) complex, which is composed of 19 subunits TRA1, SPT7, TAF5, NGG1/ADA3, SGF73, SPT20/ADA5, SPT8, TAF12, TAF6, HFI1/ADA1, UBP8, GCN5, ADA2, SPT3, SGF29, TAF10, TAF9, SGF11 and SUS1. The SAGA complex is composed of 4 modules, namely the HAT (histone acetyltransferase) module (GCN5, ADA2, NGG1/ADA3 and SGF29), the DUB (deubiquitinating) module (UBP8, SGF11, SGF73 and SUS1), the core or TAF (TBP-associated factor) module (TAF5, TAF6, TAF9, TAF10 and TAF12), and the Tra1 or SPT (Suppressor of Ty) module (TRA1, HFI1/ADA1, SPT3, SPT7, SPT8 and SPT20/ADA5). The Tra1/SPT module binds activators, the core module recruits TBP (TATA-binding protein), the HAT module contains the histone H3 acetyltransferase GCN5, and the DUB module comprises the histone H2B deubiquitinase UBP8. Also identified in an altered form of SAGA, named SALSA (SAGA altered, Spt8 absent) or SLIK (SAGA-like) complex, which contains a C-terminal truncated form of SPT7 and is missing SPT8. However, it has been shown that the SAGA and SAGA-like SALSA/SLIK transcriptional coactivators are structurally and biochemically equivalent. Component of the NuA4 acetyltransferase complex, which consists of the catalytic subunit ESA1 and the 12 non-catalytic subunits ACT1, ARP4, EAF1/VID21, SWC4/EAF2, EAF3, EAF5, EAF6, EAF7, EPL1, TRA1, YAF9 and YNG2. TRA1 is the scaffold subunit for binding to a variety of transcription activators or transcription factors to recruit NuA4 for targeted gene activation. Identified in the Ada.spt complex with NGG1/ADA3 and SPT7.

It is found in the nucleus. Its function is as follows. Essential scaffold subunit of the transcription coactivator SAGA complex. SAGA acts as a general cofactor required for essentially all RNA polymerase II transcription. At the promoters, SAGA is required for transcription pre-initiation complex (PIC) recruitment. It influences RNA polymerase II transcriptional activity through different activities such as TBP interaction (via core/TAF module) and promoter selectivity, interaction with transcription activators (via Tra1/SPT module), and chromatin modification through histone acetylation (via HAT module) and deubiquitination (via DUB module). SAGA preferentially acetylates histones H3 (to form H3K9ac, H3K14ac, H3K18ac and H3K23ac) and H2B and deubiquitinates histone H2B. SAGA interacts with DNA via upstream activating sequences (UASs). Also identified in a modified version of SAGA named SALSA or SLIK. The cleavage of SPT7 and the absence of the SPT8 subunit in SLIK neither drive any major conformational differences in its structure compared with SAGA, nor significantly affect HAT, DUB, or DNA-binding activities. Component of the NuA4 histone H4/H2A acetyltransferase involved in transcription and DNA repair. The protein is SAGA complex/NuA4 acetyltransferase complex subunit TRA1 of Saccharomyces cerevisiae (strain ATCC 204508 / S288c) (Baker's yeast).